The following is a 503-amino-acid chain: Cobyric acid synthase (503 aa).

One can recognise a GATase cobBQ-type domain in the interval 251–450 (DLDIAVIRLP…IHGIFENAAF (200 aa)). Cys331 functions as the Nucleophile in the catalytic mechanism. His442 is an active-site residue.

Belongs to the CobB/CobQ family. CobQ subfamily.

It functions in the pathway cofactor biosynthesis; adenosylcobalamin biosynthesis. Catalyzes amidations at positions B, D, E, and G on adenosylcobyrinic A,C-diamide. NH(2) groups are provided by glutamine, and one molecule of ATP is hydrogenolyzed for each amidation. The polypeptide is Cobyric acid synthase (Dehalococcoides mccartyi (strain ATCC BAA-2100 / JCM 16839 / KCTC 5957 / BAV1)).